Consider the following 324-residue polypeptide: IDS-like terpene synthase 2 (324 aa).

2 residues coordinate Mg(2+): D77 and D81.

It belongs to the FPP/GGPP synthase family. Mg(2+) is required as a cofactor.

The enzyme catalyses (2E)-geranyl diphosphate = (E)-beta-ocimene + diphosphate. The catalysed reaction is (2E,6E)-farnesyl diphosphate = (3E,6E)-alpha-farnesene + diphosphate. It catalyses the reaction (2E,6E,10E)-geranylgeranyl diphosphate = (E,E,E)-alpha-springene + diphosphate. Functionally, terpene synthase that shows monoterpene synthase activity and produces (E)-beta-ocimene as a major product, using geranyl diphosphate (GPP) as substrate. Also shows sesquiterpene synthase activity as it is able to convert farnesyl diphosphate (FPP) into (E,E)-alpha-farnesene. Finally, TPS2 can convert geranylgeranyl diphosphate into (E,E,E)-alpha-springene. This is IDS-like terpene synthase 2 from Melampsora lini (Rust fungus).